The primary structure comprises 355 residues: NADH dehydrogenase-like protein YutJ (355 aa).

Belongs to the NADH dehydrogenase family. FAD is required as a cofactor.

This is NADH dehydrogenase-like protein YutJ (yutJ) from Bacillus subtilis (strain 168).